A 283-amino-acid polypeptide reads, in one-letter code: Bifunctional protein FolD (283 aa).

NADP(+) is bound by residues 164 to 166 (GRS), serine 189, and isoleucine 230.

The protein belongs to the tetrahydrofolate dehydrogenase/cyclohydrolase family. As to quaternary structure, homodimer.

The catalysed reaction is (6R)-5,10-methylene-5,6,7,8-tetrahydrofolate + NADP(+) = (6R)-5,10-methenyltetrahydrofolate + NADPH. It catalyses the reaction (6R)-5,10-methenyltetrahydrofolate + H2O = (6R)-10-formyltetrahydrofolate + H(+). The protein operates within one-carbon metabolism; tetrahydrofolate interconversion. In terms of biological role, catalyzes the oxidation of 5,10-methylenetetrahydrofolate to 5,10-methenyltetrahydrofolate and then the hydrolysis of 5,10-methenyltetrahydrofolate to 10-formyltetrahydrofolate. The sequence is that of Bifunctional protein FolD from Lacticaseibacillus casei (strain BL23) (Lactobacillus casei).